The following is a 195-amino-acid chain: Nucleoside triphosphate pyrophosphatase (195 aa).

Asp-70 functions as the Proton acceptor in the catalytic mechanism.

Belongs to the Maf family. The cofactor is a divalent metal cation.

The protein resides in the cytoplasm. The catalysed reaction is a ribonucleoside 5'-triphosphate + H2O = a ribonucleoside 5'-phosphate + diphosphate + H(+). The enzyme catalyses a 2'-deoxyribonucleoside 5'-triphosphate + H2O = a 2'-deoxyribonucleoside 5'-phosphate + diphosphate + H(+). Its function is as follows. Nucleoside triphosphate pyrophosphatase. May have a dual role in cell division arrest and in preventing the incorporation of modified nucleotides into cellular nucleic acids. The sequence is that of Nucleoside triphosphate pyrophosphatase from Synechocystis sp. (strain ATCC 27184 / PCC 6803 / Kazusa).